Consider the following 392-residue polypeptide: Casein kinase II subunit alpha (392 aa).

The Protein kinase domain occupies 39–324; that stretch reads YQLVRKLGRG…AREAMDHPYF (286 aa). Residues 45–53 and lysine 68 each bind ATP; that span reads LGRGKYSEV. Catalysis depends on aspartate 156, which acts as the Proton acceptor. A disordered region spans residues 334–355; that stretch reads MGGSNMPSGSSTPVSSASMMSG. Positions 337-354 are enriched in low complexity; that stretch reads SNMPSGSSTPVSSASMMS.

This sequence belongs to the protein kinase superfamily. Ser/Thr protein kinase family. CK2 subfamily. Tetramer composed of an alpha chain, an alpha' and two beta chains.

Its subcellular location is the nucleus. It catalyses the reaction L-seryl-[protein] + ATP = O-phospho-L-seryl-[protein] + ADP + H(+). It carries out the reaction L-threonyl-[protein] + ATP = O-phospho-L-threonyl-[protein] + ADP + H(+). Its function is as follows. Catalytic subunit of a constitutively active serine/threonine-protein kinase complex that phosphorylates a large number of substrates containing acidic residues C-terminal to the phosphorylated serine or threonine. Regulates numerous cellular processes, such as cell cycle progression, apoptosis and transcription, as well as viral infection. May act as a regulatory node which integrates and coordinates numerous signals leading to an appropriate cellular response. During mitosis, functions as a component of the p53/TP53-dependent spindle assembly checkpoint (SAC) that maintains cyclin-B-CDK1 activity and G2 arrest in response to spindle damage. Can also negatively regulate apoptosis. Phosphorylates the caspases CASP9 and CASP2 and the apoptotic regulator NOL3. Phosphorylation protects CASP9 from cleavage and activation by CASP8, and inhibits the dimerization of CASP2 and activation of CASP8. Plays an important role in the circadian clock function by phosphorylating BMAL1. The chain is Casein kinase II subunit alpha (csnk2a1) from Xenopus laevis (African clawed frog).